The following is a 421-amino-acid chain: Forkhead box protein J1 (421 aa).

2 disordered regions span residues 1 to 34 (MAES…DSLT) and 48 to 116 (KAPA…DYAT). Low complexity predominate over residues 66 to 80 (PGSAAPGSPLAADPA). A compositionally biased stretch (polar residues) spans 90 to 99 (KPTSSCTSRS). Residues 120 to 210 (VKPPYSYATL…YAERLLSGAF (91 aa)) constitute a DNA-binding region (fork-head). Positions 261-302 (AGWGAGEGRLGHKRKQPLPKRVAKVPRPPSTLLPTPEEQGEL) are disordered. A compositionally biased stretch (basic residues) spans 271-284 (GHKRKQPLPKRVAK).

The protein belongs to the FOXJ1 family. Testis, oviduct, lung and brain cortex.

Its subcellular location is the nucleus. Functionally, transcription factor specifically required for the formation of motile cilia. Acts by activating transcription of genes that mediate assembly of motile cilia, such as CFAP157. Binds the DNA consensus sequences 5'-HWDTGTTTGTTTA-3' or 5'-KTTTGTTGTTKTW-3' (where H is not G, W is A or T, D is not C, and K is G or T). Activates the transcription of a variety of ciliary proteins in the developing brain and lung. In Homo sapiens (Human), this protein is Forkhead box protein J1.